A 102-amino-acid polypeptide reads, in one-letter code: Large ribosomal subunit protein bL21 (102 aa).

This sequence belongs to the bacterial ribosomal protein bL21 family. Part of the 50S ribosomal subunit. Contacts protein L20.

This protein binds to 23S rRNA in the presence of protein L20. The polypeptide is Large ribosomal subunit protein bL21 (Saccharopolyspora erythraea (strain ATCC 11635 / DSM 40517 / JCM 4748 / NBRC 13426 / NCIMB 8594 / NRRL 2338)).